The chain runs to 481 residues: Anti-sigma-I factor RsgI5 (481 aa).

Residues 1–50 (MKHKGIVLKLTKSKAIISTNDFQCYYIKRSPTIYVGKEVEFTNKDIVTKK) lie on the Cytoplasmic side of the membrane. Residues 3-50 (HKGIVLKLTKSKAIISTNDFQCYYIKRSPTIYVGKEVEFTNKDIVTKK) form the RsgI N-terminal anti-sigma domain. The chain crosses the membrane as a helical span at residues 51–71 (SVLIKPALSVACFILLIACVL). Residues 72–481 (SLSKIINNIS…DATFIGIKVD (410 aa)) lie on the Extracellular side of the membrane. The disordered stretch occupies residues 255–339 (ASEERNPEES…TPTPTPTPAD (85 aa)). Residues 256–265 (SEERNPEESP) are compositionally biased toward basic and acidic residues. Composition is skewed to low complexity over residues 266 to 283 (KMTP…TPTD) and 291 to 315 (NTPT…TSTP). Positions 316–336 (APKPTSTPTPTLMPTPTPTPT) are enriched in pro residues.

As to quaternary structure, interacts (via RsgI N-terminal anti-sigma domain) with SigI5.

Its subcellular location is the cell membrane. Anti-sigma factor for SigI5. Negatively regulates SigI5 activity through direct interaction. Binding of the polysaccharide substrate to the extracellular C-terminal sensing domain of RsgI5 may induce a conformational change in its N-terminal cytoplasmic region, leading to the release and activation of SigI5. The sequence is that of Anti-sigma-I factor RsgI5 from Acetivibrio thermocellus (strain ATCC 27405 / DSM 1237 / JCM 9322 / NBRC 103400 / NCIMB 10682 / NRRL B-4536 / VPI 7372) (Clostridium thermocellum).